A 90-amino-acid chain; its full sequence is MVILDPTLDERTVAPSLETFLNVIRKDGGTVDKVDIWGRRRLAYEIAKHAEGIYAVIDVKAEPATVSELDRQLNLNESVLRTKVLRTDKH.

An Isoglutamyl lysine isopeptide (Lys-Gln) (interchain with Q-Cter in protein Pup) cross-link involves residue lysine 33.

Belongs to the bacterial ribosomal protein bS6 family.

Its function is as follows. Binds together with bS18 to 16S ribosomal RNA. The chain is Small ribosomal subunit protein bS6 (rpsF) from Mycolicibacterium smegmatis (strain ATCC 700084 / mc(2)155) (Mycobacterium smegmatis).